The sequence spans 452 residues: L-seryl-tRNA(Sec) selenium transferase (452 aa).

The residue at position 285 (Lys285) is an N6-(pyridoxal phosphate)lysine.

This sequence belongs to the SelA family. Pyridoxal 5'-phosphate serves as cofactor.

It is found in the cytoplasm. It carries out the reaction L-seryl-tRNA(Sec) + selenophosphate + H(+) = L-selenocysteinyl-tRNA(Sec) + phosphate. It functions in the pathway aminoacyl-tRNA biosynthesis; selenocysteinyl-tRNA(Sec) biosynthesis; selenocysteinyl-tRNA(Sec) from L-seryl-tRNA(Sec) (bacterial route): step 1/1. In terms of biological role, converts seryl-tRNA(Sec) to selenocysteinyl-tRNA(Sec) required for selenoprotein biosynthesis. In Aquifex aeolicus (strain VF5), this protein is L-seryl-tRNA(Sec) selenium transferase.